Here is a 169-residue protein sequence, read N- to C-terminus: N-alpha-acetyltransferase 50 (169 aa).

Positions 6–155 (IELGDVTPHN…DAHVLQKNLK (150 aa)) constitute an N-acetyltransferase domain. Thr-12 carries the phosphothreonine modification. Tyr-31 lines the substrate pocket. 2 positions are modified to N6-acetyllysine: Lys-34 and Lys-37. Residue Tyr-73 is part of the active site. Met-75 provides a ligand contact to substrate. An acetyl-CoA-binding site is contributed by 77–90 (LGCLAPYRRLGIGT). Tyr-110 is subject to Phosphotyrosine. His-112 is a catalytic residue. 117-126 (NESAIDFYRK) contacts CoA. Residues 138–141 (YYKR) are substrate. Lys-140 is modified (N6-acetyllysine).

The protein belongs to the acetyltransferase family. GNAT subfamily. In terms of assembly, component of the N-terminal acetyltransferase E (NatE) complex at least composed of NAA10, NAA15 and NAA50. Interacts with NAA10. Interacts with NAA15. Predominantly interacts with NAA15 in the N-terminal acetyltransferase A complex (NatA complex); the interactions reduce the acetylation activity of the NatA complex. Component of the N-terminal acetyltransferase E (NatE)/HYPK complex at least composed of NAA10, NAA15, NAA50 and HYPK. Within the complex interacts with NAA15. Its capacity to interact with the NatA complex is reduced by HYPK. Interacts with NAA35.

It localises to the cytoplasm. The protein localises to the nucleus. The enzyme catalyses N-terminal L-methionyl-L-alanyl-[protein] + acetyl-CoA = N-terminal N(alpha)-acetyl-L-methionyl-L-alanyl-[protein] + CoA + H(+). It carries out the reaction N-terminal L-methionyl-L-seryl-[protein] + acetyl-CoA = N-terminal N(alpha)-acetyl-L-methionyl-L-seryl-[protein] + CoA + H(+). The catalysed reaction is N-terminal L-methionyl-L-valyl-[protein] + acetyl-CoA = N-terminal N(alpha)-acetyl-L-methionyl-L-valyl-[protein] + CoA + H(+). It catalyses the reaction N-terminal L-methionyl-L-threonyl-[protein] + acetyl-CoA = N-terminal N(alpha)-acetyl-L-methionyl-L-threonyl-[protein] + CoA + H(+). The enzyme catalyses N-terminal L-methionyl-L-lysyl-[protein] + acetyl-CoA = N-terminal N(alpha)-acetyl-L-methionyl-L-lysyl-[protein] + CoA + H(+). It carries out the reaction N-terminal L-methionyl-L-leucyl-[protein] + acetyl-CoA = N-terminal N(alpha)-acetyl-L-methionyl-L-leucyl-[protein] + CoA + H(+). The catalysed reaction is N-terminal L-methionyl-L-phenylalanyl-[protein] + acetyl-CoA = N-terminal N(alpha)-acetyl-L-methionyl-L-phenylalanyl-[protein] + CoA + H(+). It catalyses the reaction N-terminal L-methionyl-L-tyrosyl-[protein] + acetyl-CoA = N-terminal N(alpha)-acetyl-L-methionyl-L-tyrosyl-[protein] + CoA + H(+). Its function is as follows. N-alpha-acetyltransferase that acetylates the N-terminus of proteins that retain their initiating methionine. Has a broad substrate specificity: able to acetylate the initiator methionine of most peptides, except for those with a proline in second position. Also displays N-epsilon-acetyltransferase activity by mediating acetylation of the side chain of specific lysines on proteins. Autoacetylates in vivo. The relevance of N-epsilon-acetyltransferase activity is however unclear: able to acetylate H4 in vitro, but this result has not been confirmed in vivo. Component of N-alpha-acetyltransferase complexes containing NAA10 and NAA15, which has N-alpha-acetyltransferase activity. Does not influence the acetyltransferase activity of NAA10. However, it negatively regulates the N-alpha-acetyltransferase activity of the N-terminal acetyltransferase A complex (also called the NatA complex). The multiprotein complexes probably constitute the major contributor for N-terminal acetylation at the ribosome exit tunnel, with NAA10 acetylating all amino termini that are devoid of methionine and NAA50 acetylating other peptides. Required for sister chromatid cohesion during mitosis by promoting binding of CDCA5/sororin to cohesin: may act by counteracting the function of NAA10. This is N-alpha-acetyltransferase 50 (NAA50) from Bos taurus (Bovine).